A 777-amino-acid polypeptide reads, in one-letter code: Subtilisin-like protease SBT3.7 (777 aa).

An N-terminal signal peptide occupies residues 1-22 (MRNHRTSIFVVLSLVIILNGQS). The propeptide at 23 to 113 (GFLPRAGAES…VIPDRFYKPA (91 aa)) is activation peptide. In terms of domain architecture, Inhibitor I9 spans 34 to 111 (VHIVYLGEKQ…VHVIPDRFYK (78 aa)). Residues 117 to 624 (TWDYLGLSPT…GGLVNPEKAT (508 aa)) form the Peptidase S8 domain. Residue Asn-133 is glycosylated (N-linked (GlcNAc...) asparagine). Catalysis depends on Asp-147, which acts as the Charge relay system. Asn-180 and Asn-206 each carry an N-linked (GlcNAc...) asparagine glycan. Catalysis depends on His-222, which acts as the Charge relay system. N-linked (GlcNAc...) asparagine glycosylation is found at Asn-237, Asn-397, Asn-412, and Asn-540. The PA domain maps to 386–481 (SLVYPENPGN…ELGTYILFYI (96 aa)). Ser-555 functions as the Charge relay system in the catalytic mechanism. N-linked (GlcNAc...) asparagine glycosylation is found at Asn-647, Asn-723, and Asn-758.

This sequence belongs to the peptidase S8 family.

The protein localises to the secreted. This Arabidopsis thaliana (Mouse-ear cress) protein is Subtilisin-like protease SBT3.7.